Here is a 333-residue protein sequence, read N- to C-terminus: Ribose-phosphate pyrophosphokinase (333 aa).

Residue aspartate 58–glutamate 60 coordinates ATP. 2 residues coordinate Mg(2+): histidine 151 and aspartate 190. The active site involves lysine 214. D-ribose 5-phosphate contacts are provided by residues arginine 216, aspartate 240, and aspartate 244 to threonine 248.

This sequence belongs to the ribose-phosphate pyrophosphokinase family. Class I subfamily. As to quaternary structure, homohexamer. Mg(2+) is required as a cofactor.

The protein localises to the cytoplasm. It catalyses the reaction D-ribose 5-phosphate + ATP = 5-phospho-alpha-D-ribose 1-diphosphate + AMP + H(+). It participates in metabolic intermediate biosynthesis; 5-phospho-alpha-D-ribose 1-diphosphate biosynthesis; 5-phospho-alpha-D-ribose 1-diphosphate from D-ribose 5-phosphate (route I): step 1/1. In terms of biological role, involved in the biosynthesis of the central metabolite phospho-alpha-D-ribosyl-1-pyrophosphate (PRPP) via the transfer of pyrophosphoryl group from ATP to 1-hydroxyl of ribose-5-phosphate (Rib-5-P). This is Ribose-phosphate pyrophosphokinase from Synechocystis sp. (strain ATCC 27184 / PCC 6803 / Kazusa).